We begin with the raw amino-acid sequence, 651 residues long: Acetyl-coenzyme A synthetase (651 aa).

CoA is bound by residues 191–194 (RGGK), T311, and N335. ATP contacts are provided by residues 387–389 (GEP), 411–416 (DTWWQT), D500, and R515. S523 contacts CoA. R526 contacts ATP. The Mg(2+) site is built by V537, H539, and V542. CoA is bound at residue R584. The residue at position 609 (K609) is an N6-acetyllysine.

Belongs to the ATP-dependent AMP-binding enzyme family. Mg(2+) is required as a cofactor. In terms of processing, acetylated. Deacetylation by the SIR2-homolog deacetylase activates the enzyme.

The catalysed reaction is acetate + ATP + CoA = acetyl-CoA + AMP + diphosphate. Its function is as follows. Catalyzes the conversion of acetate into acetyl-CoA (AcCoA), an essential intermediate at the junction of anabolic and catabolic pathways. AcsA undergoes a two-step reaction. In the first half reaction, AcsA combines acetate with ATP to form acetyl-adenylate (AcAMP) intermediate. In the second half reaction, it can then transfer the acetyl group from AcAMP to the sulfhydryl group of CoA, forming the product AcCoA. The sequence is that of Acetyl-coenzyme A synthetase from Pseudomonas savastanoi pv. phaseolicola (strain 1448A / Race 6) (Pseudomonas syringae pv. phaseolicola (strain 1448A / Race 6)).